A 261-amino-acid polypeptide reads, in one-letter code: Bidirectional sugar transporter SWEET1b (261 aa).

The Extracellular portion of the chain corresponds to 1 to 6 (MEDLAK). The chain crosses the membrane as a helical span at residues 7–27 (FLFGVSGNVIALFLFLSPVPT). Positions 7–95 (FLFGVSGNVI…VVFLVFASTH (89 aa)) constitute a MtN3/slv 1 domain. The Cytoplasmic segment spans residues 28–42 (FWRIIRRKSTEDFSG). The chain crosses the membrane as a helical span at residues 43–63 (VPYNMTLINCLLSAWYGLPFV). The Extracellular segment spans residues 64 to 71 (SPNNILVS). Residues 72–92 (TINGAGAVIETAYVVVFLVFA) traverse the membrane as a helical segment. Residues 93 to 101 (STHKTRLRT) lie on the Cytoplasmic side of the membrane. A helical membrane pass occupies residues 102–122 (LGLAAAVASVFAAVALVSLLA). Residues 123 to 129 (LHGQHRK) lie on the Extracellular side of the membrane. Residues 130–150 (LLCGVAATVCSICMYASPLSI) form a helical membrane-spanning segment. In terms of domain architecture, MtN3/slv 2 spans 133 to 215 (GVAATVCSIC…VLYAIYRNNK (83 aa)). Residues 151–164 (MRLVIKTKSVEYMP) are Cytoplasmic-facing. The chain crosses the membrane as a helical span at residues 165-185 (FLLSLAVFLCGTSWFIYGLLG). Residues 186 to 189 (RDPF) are Extracellular-facing. A helical transmembrane segment spans residues 190-210 (VTIPNGCGSFLGAVQLVLYAI). Over 211–261 (YRNNKGAGGGSGGKQAGDDDVEMAEGRNNKVADGGAAEDDSTAGGKAGTEV) the chain is Cytoplasmic. Residues 218 to 261 (GGGSGGKQAGDDDVEMAEGRNNKVADGGAAEDDSTAGGKAGTEV) form a disordered region.

The protein belongs to the SWEET sugar transporter family. As to quaternary structure, forms homodimers.

It is found in the cell membrane. The catalysed reaction is D-glucose(out) = D-glucose(in). The enzyme catalyses D-galactose(in) = D-galactose(out). In terms of biological role, mediates transport of sugars across the plasma membrane. Can transport glucose and galactose, but not fructose, mannose and sucrose. The polypeptide is Bidirectional sugar transporter SWEET1b (SWEET1B) (Oryza sativa subsp. indica (Rice)).